The chain runs to 648 residues: Calpain-5 (648 aa).

The Calpain catalytic domain occupies 28 to 353 (PFVDTLFPPT…FTDISLCQLF (326 aa)). Residues Cys-83, His-252, and Asn-290 contribute to the active site. The tract at residues 354-509 (NTSVFSFSRS…VYSDEHIHFS (156 aa)) is domain III. In terms of domain architecture, C2 spans 502–625 (SDEHIHFSPL…ENRDTTLQLT (124 aa)).

The protein belongs to the peptidase C2 family. The cofactor is Ca(2+). As to expression, expressed in neuronal, but not in GABA-ergic neurons, intestinal, hypodermal and excretory tissues.

Required for the correct female sexual development of the soma and germline in hermaphrodite animals, while being fully dispensable in males. Has calcium-dependent proteolytic activity and is involved in the cleavage of tra-2, for which it acts as a potentiator. Capable of calcium-dependent autolysis. Part of the necrosis cell death pathway. Required for necrosis of intestinal cells induced by B.thuringiensis endotoxin Cry6Aa. The chain is Calpain-5 from Caenorhabditis elegans.